Here is a 504-residue protein sequence, read N- to C-terminus: Anaerobic nitric oxide reductase transcription regulator NorR (504 aa).

A 4-aspartylphosphate modification is found at D57. One can recognise a Sigma-54 factor interaction domain in the interval 187–416 (MIGLSPGMTQ…LEHAIHRAVV (230 aa)). ATP is bound by residues 215–222 (GETGTGKE) and 278–287 (ADNGTLFLDE). The segment at residues 479-498 (WAACARMLETDVANLHRLAK) is a DNA-binding region (H-T-H motif).

The protein operates within nitrogen metabolism; nitric oxide reduction. Its function is as follows. Required for the expression of anaerobic nitric oxide (NO) reductase, acts as a transcriptional activator for at least the norVW operon. Activation also requires sigma-54. This chain is Anaerobic nitric oxide reductase transcription regulator NorR, found in Shigella sonnei (strain Ss046).